Reading from the N-terminus, the 393-residue chain is Formate-dependent phosphoribosylglycinamide formyltransferase (393 aa).

N(1)-(5-phospho-beta-D-ribosyl)glycinamide-binding positions include 22–23 and Glu-82; that span reads EL. Residues Arg-114, Lys-155, 160–165, 195–198, and Glu-203 each bind ATP; these read SSGHGQ and EGFV. Positions 119 to 308 constitute an ATP-grasp domain; it reads RLAAEELGLP…QFALHARAVL (190 aa). The Mg(2+) site is built by Glu-267 and Glu-279. N(1)-(5-phospho-beta-D-ribosyl)glycinamide is bound by residues Asp-286, Lys-356, and 363–364; that span reads RR.

The protein belongs to the PurK/PurT family. Homodimer.

It catalyses the reaction N(1)-(5-phospho-beta-D-ribosyl)glycinamide + formate + ATP = N(2)-formyl-N(1)-(5-phospho-beta-D-ribosyl)glycinamide + ADP + phosphate + H(+). It functions in the pathway purine metabolism; IMP biosynthesis via de novo pathway; N(2)-formyl-N(1)-(5-phospho-D-ribosyl)glycinamide from N(1)-(5-phospho-D-ribosyl)glycinamide (formate route): step 1/1. Its function is as follows. Involved in the de novo purine biosynthesis. Catalyzes the transfer of formate to 5-phospho-ribosyl-glycinamide (GAR), producing 5-phospho-ribosyl-N-formylglycinamide (FGAR). Formate is provided by PurU via hydrolysis of 10-formyl-tetrahydrofolate. This Parabacteroides distasonis (strain ATCC 8503 / DSM 20701 / CIP 104284 / JCM 5825 / NCTC 11152) protein is Formate-dependent phosphoribosylglycinamide formyltransferase.